A 742-amino-acid polypeptide reads, in one-letter code: uncharacterized protein (742 aa).

Positions 1-102 (MMLLKRSNDN…FTQTKPNNTD (102 aa)) are disordered. Residues 18–28 (NRQNRQNNRQN) show a composition bias toward low complexity. The segment covering 48–57 (RDSSRMDPVD) has biased composition (basic and acidic residues). 2 stretches are compositionally biased toward polar residues: residues 60–69 (TLISFTSGKP) and 77–99 (HDTG…TKPN).

This is an uncharacterized protein from Acanthamoeba polyphaga mimivirus (APMV).